We begin with the raw amino-acid sequence, 128 residues long: Large ribosomal subunit protein bL12 (128 aa).

It belongs to the bacterial ribosomal protein bL12 family. Homodimer. Part of the ribosomal stalk of the 50S ribosomal subunit. Forms a multimeric L10(L12)X complex, where L10 forms an elongated spine to which 2 to 4 L12 dimers bind in a sequential fashion. Binds GTP-bound translation factors.

Forms part of the ribosomal stalk which helps the ribosome interact with GTP-bound translation factors. Is thus essential for accurate translation. The chain is Large ribosomal subunit protein bL12 from Acidithiobacillus ferrooxidans (strain ATCC 23270 / DSM 14882 / CIP 104768 / NCIMB 8455) (Ferrobacillus ferrooxidans (strain ATCC 23270)).